We begin with the raw amino-acid sequence, 119 residues long: Large ribosomal subunit protein uL18 (119 aa).

The protein belongs to the universal ribosomal protein uL18 family. In terms of assembly, part of the 50S ribosomal subunit; part of the 5S rRNA/L5/L18/L25 subcomplex. Contacts the 5S and 23S rRNAs.

Its function is as follows. This is one of the proteins that bind and probably mediate the attachment of the 5S RNA into the large ribosomal subunit, where it forms part of the central protuberance. The polypeptide is Large ribosomal subunit protein uL18 (Staphylococcus aureus (strain Mu3 / ATCC 700698)).